The sequence spans 411 residues: RING-H2 finger protein ATL65 (411 aa).

Positions 1-32 (MRFVAPPPRSGDNSPSPSPSSGISEEILSRSS) are disordered. The span at 10–21 (SGDNSPSPSPSS) shows a compositional bias: low complexity. A helical transmembrane segment spans residues 36-56 (LEFSPPLIAMVVVLAAAFLFV). The RING-type; atypical zinc-finger motif lies at 156 to 198 (CAVCLLEFEEGDYVRTLPLCFHAFHLECIDEWLRSHPNCPLCR).

It belongs to the RING-type zinc finger family. ATL subfamily.

The protein resides in the membrane. The enzyme catalyses S-ubiquitinyl-[E2 ubiquitin-conjugating enzyme]-L-cysteine + [acceptor protein]-L-lysine = [E2 ubiquitin-conjugating enzyme]-L-cysteine + N(6)-ubiquitinyl-[acceptor protein]-L-lysine.. It participates in protein modification; protein ubiquitination. The protein is RING-H2 finger protein ATL65 (ATL65) of Arabidopsis thaliana (Mouse-ear cress).